The sequence spans 185 residues: Nucleoside triphosphate pyrophosphatase (185 aa).

The active-site Proton acceptor is Asp70.

The protein belongs to the Maf family. It depends on a divalent metal cation as a cofactor.

Its subcellular location is the cytoplasm. The catalysed reaction is a ribonucleoside 5'-triphosphate + H2O = a ribonucleoside 5'-phosphate + diphosphate + H(+). The enzyme catalyses a 2'-deoxyribonucleoside 5'-triphosphate + H2O = a 2'-deoxyribonucleoside 5'-phosphate + diphosphate + H(+). Functionally, nucleoside triphosphate pyrophosphatase. May have a dual role in cell division arrest and in preventing the incorporation of modified nucleotides into cellular nucleic acids. This chain is Nucleoside triphosphate pyrophosphatase, found in Nitratiruptor sp. (strain SB155-2).